Reading from the N-terminus, the 513-residue chain is 2-isopropylmalate synthase (513 aa).

One can recognise a Pyruvate carboxyltransferase domain in the interval 4–266; it reads IEFFDTSLRD…KSPLVLAETM (263 aa). 4 residues coordinate Mn(2+): Asp-13, His-201, His-203, and Asn-237. A regulatory domain region spans residues 390-513; the sequence is ILNNVQIDGH…VEQISAHDGI (124 aa).

Belongs to the alpha-IPM synthase/homocitrate synthase family. LeuA type 1 subfamily. In terms of assembly, homodimer. Requires Mn(2+) as cofactor.

The protein resides in the cytoplasm. The enzyme catalyses 3-methyl-2-oxobutanoate + acetyl-CoA + H2O = (2S)-2-isopropylmalate + CoA + H(+). It functions in the pathway amino-acid biosynthesis; L-leucine biosynthesis; L-leucine from 3-methyl-2-oxobutanoate: step 1/4. In terms of biological role, catalyzes the condensation of the acetyl group of acetyl-CoA with 3-methyl-2-oxobutanoate (2-ketoisovalerate) to form 3-carboxy-3-hydroxy-4-methylpentanoate (2-isopropylmalate). In Lactococcus lactis subsp. cremoris (strain SK11), this protein is 2-isopropylmalate synthase.